The primary structure comprises 179 residues: Fucolectin-4 (179 aa).

Residues 1 to 23 (MEVKTIMLLFQILAISTLKQGSA) form the signal peptide. The segment at 31 to 179 (EENVALRGRA…VEVNALLPVN (149 aa)) is F5/8 type C-like. Residues asparagine 58, aspartate 61, asparagine 63, and serine 72 each coordinate Ca(2+). 3 disulfides stabilise this stretch: cysteine 73/cysteine 168, cysteine 104/cysteine 105, and cysteine 130/cysteine 146. Alpha-L-fucose-binding residues include histidine 75 and arginine 101. The Cell attachment site motif lies at 101 to 103 (RGD). Residue arginine 108 coordinates alpha-L-fucose. Ca(2+) is bound by residues cysteine 168 and glutamate 169.

It belongs to the fucolectin family. As to quaternary structure, homotrimer. As to expression, gill mucous cells.

It localises to the secreted. Functionally, acts as a defensive agent. Recognizes blood group fucosylated oligosaccharides including A, B, H and Lewis B-type antigens. Does not recognize Lewis A antigen and has low affinity for monovalent haptens. This is Fucolectin-4 from Anguilla japonica (Japanese eel).